Here is a 176-residue protein sequence, read N- to C-terminus: MENNSSPESSEEIVKQNGIVSNQLSQDGITNESLGNDHIGVEILSVKPEKLYEAISTLRGYGFNYLQCQGGYDEGPGKCLVSFYHLISLGDIQDIKEIKEIRVKVFLNRDSDLSVPSLYKIFKGSDWQERETYDMFGINFADHPNPTRLLMPEDWRGWPLRKDYIQPDFYELQDAY.

It belongs to the complex I 30 kDa subunit family. NDH-1 can be composed of about 15 different subunits; different subcomplexes with different compositions have been identified which probably have different functions.

It is found in the cellular thylakoid membrane. It carries out the reaction a plastoquinone + NADH + (n+1) H(+)(in) = a plastoquinol + NAD(+) + n H(+)(out). The enzyme catalyses a plastoquinone + NADPH + (n+1) H(+)(in) = a plastoquinol + NADP(+) + n H(+)(out). In terms of biological role, NDH-1 shuttles electrons from an unknown electron donor, via FMN and iron-sulfur (Fe-S) centers, to quinones in the respiratory and/or the photosynthetic chain. The immediate electron acceptor for the enzyme in this species is believed to be plastoquinone. Couples the redox reaction to proton translocation, and thus conserves the redox energy in a proton gradient. Cyanobacterial NDH-1 also plays a role in inorganic carbon-concentration. The sequence is that of NAD(P)H-quinone oxidoreductase subunit J from Prochlorococcus marinus subsp. pastoris (strain CCMP1986 / NIES-2087 / MED4).